The chain runs to 275 residues: Penicillin-insensitive murein endopeptidase (275 aa).

Residues 1–19 (MKKWIAGLLALIAISPVMA) form the signal peptide. Intrachain disulfides connect C44/C264, C187/C235, and C216/C223. Zn(2+)-binding residues include H110, H113, D120, D147, and H211. The tract at residues 234 to 262 (GCGAELESWFQPHQPSAKPGKTLPPPLPP) is disordered.

It belongs to the peptidase M74 family. As to quaternary structure, dimer. Zn(2+) is required as a cofactor.

The protein resides in the periplasm. Its function is as follows. Murein endopeptidase that cleaves the D-alanyl-meso-2,6-diamino-pimelyl amide bond that connects peptidoglycan strands. Likely plays a role in the removal of murein from the sacculus. The chain is Penicillin-insensitive murein endopeptidase from Yersinia enterocolitica serotype O:8 / biotype 1B (strain NCTC 13174 / 8081).